Reading from the N-terminus, the 124-residue chain is uncharacterized protein (124 aa).

Its subcellular location is the cytoplasm. It is found in the nucleus. This is an uncharacterized protein from Schizosaccharomyces pombe (strain 972 / ATCC 24843) (Fission yeast).